The sequence spans 244 residues: DnaJ homolog subfamily C member 4 (244 aa).

A J domain is found at Asn-37–Leu-102. The interval Arg-96–Trp-127 is disordered. A compositionally biased stretch (polar residues) spans His-103–Trp-127. A helical membrane pass occupies residues Val-159 to Phe-178. The tract at residues Arg-208–Pro-244 is disordered.

The protein resides in the membrane. The protein is DnaJ homolog subfamily C member 4 (Dnajc4) of Mus musculus (Mouse).